The primary structure comprises 509 residues: Transmembrane protein 102 (509 aa).

The Extracellular portion of the chain corresponds to 1–312; that stretch reads MASTVWGGAP…VLLATPEPPR (312 aa). The interval 167–236 is disordered; sequence PPVPEESDMT…NPETPEPLET (70 aa). The segment covering 174–204 has biased composition (basic and acidic residues); sequence DMTHQTHSKESPTDRENSVDPSHDYVPEPEP. Residues 207 to 224 show a composition bias toward low complexity; sequence SLQKSSSDLSESQSSYKD. A helical transmembrane segment spans residues 313 to 329; that stretch reads HLLLFDLIPVVTVTGWP. At 330–509 the chain is on the cytoplasmic side; sequence DTARSHSWAG…GLAGVGGGTH (180 aa).

In terms of assembly, interacts with CSF2RB; this interaction occurs preferentially in the absence of CSF2.

It is found in the cell membrane. Functionally, selectively involved in CSF2 deprivation-induced apoptosis via a mitochondria-dependent pathway. This is Transmembrane protein 102 (Tmem102) from Mus musculus (Mouse).